Reading from the N-terminus, the 317-residue chain is High-affinity zinc uptake system protein ZnuA (317 aa).

A signal peptide spans 1-31; sequence MNINIMLKNKKKKFFSILAILFILMPNNSYA. A disulfide bridge connects residues Cys-259 and Cys-313.

Belongs to the bacterial solute-binding protein 9 family.

Its subcellular location is the periplasm. Functionally, part of the ATP-binding cassette (ABC) transport system ZnuABC involved in zinc import. Binds zinc with high affinity and specificity and delivers it to the membrane permease for translocation into the cytoplasm. The chain is High-affinity zinc uptake system protein ZnuA (znuA) from Buchnera aphidicola subsp. Schizaphis graminum (strain Sg).